We begin with the raw amino-acid sequence, 146 residues long: uncharacterized protein (146 aa).

Over residues 86–96 the composition is skewed to acidic residues; it reads EFDSPMDEEEE. The disordered stretch occupies residues 86–124; the sequence is EFDSPMDEEEETKPREASLDQTAPKKSKKEELLVKNNNF.

This is an uncharacterized protein from Ostreid herpesvirus 1 (isolate France) (OsHV-1).